The chain runs to 272 residues: Probable prolyl 4-hydroxylase 11 (272 aa).

The Cytoplasmic portion of the chain corresponds to 1 to 55; sequence MSKSTSVSTILYLRQRLQGLKIYETSDLIQHINTFDELVGEQVSVDVKIEEKTKD. Residues 56-80 form a helical; Signal-anchor for type II membrane protein membrane-spanning segment; the sequence is MILLCSLSPLLTTLTCSMVKVAASL. The Lumenal portion of the chain corresponds to 81–272; sequence RFPNERWLEV…KRHCLSLNLF (192 aa). A Fe2OG dioxygenase domain is found at 179–272; it reads NGETLQVINY…KRHCLSLNLF (94 aa). His-197, Asp-199, and His-261 together coordinate Fe cation.

This sequence belongs to the P4HA family. Requires Fe(2+) as cofactor. L-ascorbate is required as a cofactor.

It is found in the endoplasmic reticulum membrane. The enzyme catalyses L-prolyl-[collagen] + 2-oxoglutarate + O2 = trans-4-hydroxy-L-prolyl-[collagen] + succinate + CO2. Catalyzes the post-translational formation of 4-hydroxyproline in -Xaa-Pro-Gly- sequences in proline-rich peptide sequences of plant glycoproteins and other proteins. Hydroxyprolines are important constituent of many plant cell wall glycoproteins such as extensins, hydroxyproline-rich glycoproteins, lectins and arabinogalactan proteins. This Arabidopsis thaliana (Mouse-ear cress) protein is Probable prolyl 4-hydroxylase 11.